Reading from the N-terminus, the 883-residue chain is Alanine--tRNA ligase (883 aa).

Zn(2+)-binding residues include His560, His564, Cys665, and His669.

This sequence belongs to the class-II aminoacyl-tRNA synthetase family. Requires Zn(2+) as cofactor.

The protein resides in the cytoplasm. The catalysed reaction is tRNA(Ala) + L-alanine + ATP = L-alanyl-tRNA(Ala) + AMP + diphosphate. In terms of biological role, catalyzes the attachment of alanine to tRNA(Ala) in a two-step reaction: alanine is first activated by ATP to form Ala-AMP and then transferred to the acceptor end of tRNA(Ala). Also edits incorrectly charged Ser-tRNA(Ala) and Gly-tRNA(Ala) via its editing domain. The sequence is that of Alanine--tRNA ligase from Mesomycoplasma hyopneumoniae (strain 7448) (Mycoplasma hyopneumoniae).